Here is a 320-residue protein sequence, read N- to C-terminus: Ribosomal RNA small subunit methyltransferase H (320 aa).

S-adenosyl-L-methionine-binding positions include 42–44, Asp-62, Phe-86, Asp-108, and Gln-115; that span reads GGH.

The protein belongs to the methyltransferase superfamily. RsmH family.

It is found in the cytoplasm. It catalyses the reaction cytidine(1402) in 16S rRNA + S-adenosyl-L-methionine = N(4)-methylcytidine(1402) in 16S rRNA + S-adenosyl-L-homocysteine + H(+). In terms of biological role, specifically methylates the N4 position of cytidine in position 1402 (C1402) of 16S rRNA. This is Ribosomal RNA small subunit methyltransferase H from Yersinia enterocolitica serotype O:8 / biotype 1B (strain NCTC 13174 / 8081).